A 706-amino-acid polypeptide reads, in one-letter code: Elongation factor G (706 aa).

Positions 15–291 (LKTRNIGISA…GVLDYLASPV (277 aa)) constitute a tr-type G domain. Residues 24 to 31 (AHIDSGKT), 91 to 95 (DTPGH), and 145 to 148 (NKLD) each bind GTP.

Belongs to the TRAFAC class translation factor GTPase superfamily. Classic translation factor GTPase family. EF-G/EF-2 subfamily.

It is found in the cytoplasm. In terms of biological role, catalyzes the GTP-dependent ribosomal translocation step during translation elongation. During this step, the ribosome changes from the pre-translocational (PRE) to the post-translocational (POST) state as the newly formed A-site-bound peptidyl-tRNA and P-site-bound deacylated tRNA move to the P and E sites, respectively. Catalyzes the coordinated movement of the two tRNA molecules, the mRNA and conformational changes in the ribosome. This Leptospira interrogans serogroup Icterohaemorrhagiae serovar copenhageni (strain Fiocruz L1-130) protein is Elongation factor G.